We begin with the raw amino-acid sequence, 384 residues long: Tryptophan--tRNA ligase (384 aa).

Residues 81–89 (PSGPMHIGH) carry the 'HIGH' region motif. Residues 252 to 256 (KMSAS) carry the 'KMSKS' region motif.

This sequence belongs to the class-I aminoacyl-tRNA synthetase family.

The protein localises to the cytoplasm. It carries out the reaction tRNA(Trp) + L-tryptophan + ATP = L-tryptophyl-tRNA(Trp) + AMP + diphosphate + H(+). The protein is Tryptophan--tRNA ligase of Thermococcus kodakarensis (strain ATCC BAA-918 / JCM 12380 / KOD1) (Pyrococcus kodakaraensis (strain KOD1)).